We begin with the raw amino-acid sequence, 116 residues long: Nucleoid-associated protein EUBELI_02017 (116 aa).

Gly residues predominate over residues 1–12 (MAKRGGFPGGMP). Positions 1 to 42 (MAKRGGFPGGMPGNMNNLMKQAQRMQRQMEEQQAELENKEFS) are disordered. Residues 13–26 (GNMNNLMKQAQRMQ) show a composition bias toward low complexity.

It belongs to the YbaB/EbfC family. Homodimer.

It localises to the cytoplasm. It is found in the nucleoid. Binds to DNA and alters its conformation. May be involved in regulation of gene expression, nucleoid organization and DNA protection. This chain is Nucleoid-associated protein EUBELI_02017, found in Lachnospira eligens (strain ATCC 27750 / DSM 3376 / VPI C15-48 / C15-B4) (Eubacterium eligens).